A 104-amino-acid chain; its full sequence is DNA-directed RNA polymerase subunit omega (104 aa).

It belongs to the RNA polymerase subunit omega family. In terms of assembly, the RNAP catalytic core consists of 2 alpha, 1 beta, 1 beta' and 1 omega subunit. When a sigma factor is associated with the core the holoenzyme is formed, which can initiate transcription.

It catalyses the reaction RNA(n) + a ribonucleoside 5'-triphosphate = RNA(n+1) + diphosphate. Its function is as follows. Promotes RNA polymerase assembly. Latches the N- and C-terminal regions of the beta' subunit thereby facilitating its interaction with the beta and alpha subunits. The sequence is that of DNA-directed RNA polymerase subunit omega (rpoZ) from Streptococcus pyogenes serotype M1.